Consider the following 547-residue polypeptide: Intercellular adhesion molecule 3 (547 aa).

Residues 1–29 (MATMVPSVLWPRACWTLLVCCLLTPGVQG) form the signal peptide. Residues 30–485 (QEFLLRVEPQ…VMDIEAGSSH (456 aa)) lie on the Extracellular side of the membrane. One can recognise an Ig-like C2-type 1 domain in the interval 46 to 103 (GGSLFVNCSTDCPSSEKIALETSLSKELVASGMGWAAFNLSNVTGNSRILCSVYCNGS). Asparagine 52, asparagine 84, asparagine 87, asparagine 101, asparagine 110, and asparagine 134 each carry an N-linked (GlcNAc...) asparagine glycan. Cystine bridges form between cysteine 53–cysteine 96 and cysteine 57–cysteine 100. The Ig-like C2-type 2 domain maps to 132-197 (GQNFTLRCQV…FSCRTELDMQ (66 aa)). Cysteines 139 and 190 form a disulfide. Residues asparagine 206, asparagine 264, asparagine 295, asparagine 308, asparagine 320, asparagine 363, asparagine 389, asparagine 453, and asparagine 457 are each glycosylated (N-linked (GlcNAc...) asparagine). In terms of domain architecture, Ig-like C2-type 3 spans 234–301 (ETSWPVDCTL…IVCNVTLGGE (68 aa)). Cysteines 241 and 294 form a disulfide. In terms of domain architecture, Ig-like C2-type 4 spans 329-382 (GSTVTVSCMAGARVQVTLDGVPAAAPGQPAQLQLNATESDDRRSFFCSATLEVD). Residues cysteine 336 and cysteine 375 are joined by a disulfide bond. The Ig-like C2-type 5 domain maps to 416 to 469 (KTTHVLQCQARGNPYPELRCLKEGSSREVPVGIPFFVNVTHNGTYQCQASSSRG). A disulfide bridge connects residues cysteine 423 and cysteine 462. A helical membrane pass occupies residues 486-510 (FVPVFVAVLLTLGVVTIVLALMYVF). Residues 511–547 (REHKRSGSYHVREESTYLPLTSMQPTQAMGEEPSRAE) are Cytoplasmic-facing.

The protein belongs to the immunoglobulin superfamily. ICAM family. Interacts with moesin/MSN. Upon stimulation by a physiologic stimuli becomes rapidly and transiently phosphorylated on serine residues. Leukocytes.

The protein resides in the membrane. Functionally, ICAM proteins are ligands for the leukocyte adhesion protein LFA-1 (integrin alpha-L/beta-2). ICAM3 is also a ligand for integrin alpha-D/beta-2. In association with integrin alpha-L/beta-2, contributes to apoptotic neutrophil phagocytosis by macrophages. This is Intercellular adhesion molecule 3 (ICAM3) from Pan troglodytes (Chimpanzee).